Reading from the N-terminus, the 134-residue chain is MSGERRKVRAVFGVAHIFASFNDTFVHVTDLSGKETSLVLTGGMKVKADRDEASPYAAMLAAQDVAQRCKELGITALHINVRATGGNKTKTPGPGAQSLRALARSGMRIGRIEDVTPIPTDSTRRKGGRRGRRL.

The segment at 115 to 134 (VTPIPTDSTRRKGGRRGRRL) is disordered. The span at 125–134 (RKGGRRGRRL) shows a compositional bias: basic residues.

It belongs to the universal ribosomal protein uS11 family.

This chain is Small ribosomal subunit protein uS11 (RPS14), found in Syntrichia ruralis (Great hairy screw-moss).